The following is a 363-amino-acid chain: Inactive CLIP domain-containing serine protease A8 (363 aa).

A signal peptide spans 1–25; that stretch reads MPSWWCCCCLVVLLYAQRMIVPSSA. Residues 33–82 enclose the Clip domain; sequence LQECPGGFCSPKYLCPNGTYNEANAQNQEIIMLRFGEEDVCQDYMQVCCS. Cystine bridges form between cysteine 36–cysteine 80, cysteine 41–cysteine 73, and cysteine 47–cysteine 81. 4 N-linked (GlcNAc...) asparagine glycosylation sites follow: asparagine 49, asparagine 83, asparagine 117, and asparagine 166. The Peptidase S1 domain occupies 114–360; sequence VEGNRTYAQY…FVTWINATIE (247 aa). 3 disulfides stabilise this stretch: cysteine 245-cysteine 317, cysteine 276-cysteine 297, and cysteine 307-cysteine 336. 2 N-linked (GlcNAc...) asparagine glycosylation sites follow: asparagine 319 and asparagine 356.

This sequence belongs to the peptidase S1 family. CLIP subfamily. As to quaternary structure, heterodimer of a light chain and a heavy chain; disulfide-linked. Post-translationally, secreted as a full-length protein. Proteolytically cleaved into two chains which remain covalently linked. Cleavage is induced by Gram-positive or Gram-negative bacteria infection.

It localises to the secreted. In terms of biological role, inactive serine protease which plays an essential role in the innate immune response against bacteria, fungi and protozoa infection by activating the melanization cascade. In the melanization cascade, acts downstream of TEP1 and SPCLIP1 to promote CLIPA28 and CLIPC9 proteolytic cleavage and CLIPC9 recruitment to microbial surfaces. In the resistant strain L3-5, required for the melanization of killed parasite P.berghei ookinetes which results in their clearance. In the susceptible strain G3, appears to be dispensable for ookinete elimination which occurs by lysis. Required for the melanization of Gram-positive and Gram-negative bacteria. During the late stage of fungus B.bassiana-mediated infection, required for the initiation of hyphae melanization by promoting prophenoloxidase PPO activation. This Anopheles gambiae (African malaria mosquito) protein is Inactive CLIP domain-containing serine protease A8.